The sequence spans 377 residues: MFRQMKLGSLATKLLLACFLVTCTSGLDIHPNLIGAGQKEGIEIWRIETFVPVPVPKSEYGKFHEGDSYIVLSTKEDKSKKGIFTWDIYYWLGKSTTQDESGTAAVLTVELDDALGKTPVQHREIQGQESEQFVKLFPGGVKYLPGGIDSGFKHTDTNAPGQKKLYQVKGAKYIRVRQVELSAKSLNNGDCFILDTGSEVYVWVGKNSQLPERLKATKAANQIKELDHRGRGKVFIVDASSTSREVKEFFTKLGSGSPSEVANTSEDDQEYEKKQDAMVTLYKVSDASGKLVTEKLSEKPLKQSMLKSEDCFVLDTVTSGVFVWIGRNSSIQEKIEAFKKGLAFLKDNKHPTWTQMQRIVDGGEPTAFKEYFLSWKN.

The N-terminal stretch at 1 to 26 is a signal peptide; that stretch reads MFRQMKLGSLATKLLLACFLVTCTSG. Gelsolin-like repeat units lie at residues 50–133, 174–243, and 298–368; these read FVPV…SEQF, IRVR…SSTS, and EKPL…PTAF.

As to expression, expressed by the venom gland (posterior main gland) (at protein level).

The protein localises to the secreted. The polypeptide is Actin depolymerising venom protein gelsolin 1 (Platymeris rhadamanthus (Red spot assassin bug)).